Here is a 288-residue protein sequence, read N- to C-terminus: Phosphatidylserine decarboxylase proenzyme (288 aa).

Catalysis depends on charge relay system; for autoendoproteolytic cleavage activity residues aspartate 91, histidine 148, and serine 254. Serine 254 (schiff-base intermediate with substrate; via pyruvic acid; for decarboxylase activity) is an active-site residue. The residue at position 254 (serine 254) is a Pyruvic acid (Ser); by autocatalysis.

This sequence belongs to the phosphatidylserine decarboxylase family. PSD-B subfamily. Prokaryotic type I sub-subfamily. In terms of assembly, heterodimer of a large membrane-associated beta subunit and a small pyruvoyl-containing alpha subunit. The cofactor is pyruvate. In terms of processing, is synthesized initially as an inactive proenzyme. Formation of the active enzyme involves a self-maturation process in which the active site pyruvoyl group is generated from an internal serine residue via an autocatalytic post-translational modification. Two non-identical subunits are generated from the proenzyme in this reaction, and the pyruvate is formed at the N-terminus of the alpha chain, which is derived from the carboxyl end of the proenzyme. The autoendoproteolytic cleavage occurs by a canonical serine protease mechanism, in which the side chain hydroxyl group of the serine supplies its oxygen atom to form the C-terminus of the beta chain, while the remainder of the serine residue undergoes an oxidative deamination to produce ammonia and the pyruvoyl prosthetic group on the alpha chain. During this reaction, the Ser that is part of the protease active site of the proenzyme becomes the pyruvoyl prosthetic group, which constitutes an essential element of the active site of the mature decarboxylase.

It is found in the cell membrane. The catalysed reaction is a 1,2-diacyl-sn-glycero-3-phospho-L-serine + H(+) = a 1,2-diacyl-sn-glycero-3-phosphoethanolamine + CO2. The protein operates within phospholipid metabolism; phosphatidylethanolamine biosynthesis; phosphatidylethanolamine from CDP-diacylglycerol: step 2/2. In terms of biological role, catalyzes the formation of phosphatidylethanolamine (PtdEtn) from phosphatidylserine (PtdSer). The polypeptide is Phosphatidylserine decarboxylase proenzyme (Pseudoalteromonas translucida (strain TAC 125)).